The sequence spans 296 residues: Elongation factor Ts (296 aa).

The segment at 81-84 (TDFV) is involved in Mg(2+) ion dislocation from EF-Tu.

The protein belongs to the EF-Ts family.

The protein localises to the cytoplasm. Associates with the EF-Tu.GDP complex and induces the exchange of GDP to GTP. It remains bound to the aminoacyl-tRNA.EF-Tu.GTP complex up to the GTP hydrolysis stage on the ribosome. This is Elongation factor Ts from Ruthia magnifica subsp. Calyptogena magnifica.